Consider the following 244-residue polypeptide: Acetylglutamate kinase (244 aa).

Residues 40 to 41 (GG), Arg62, and Asn155 contribute to the substrate site.

This sequence belongs to the acetylglutamate kinase family. ArgB subfamily.

The protein resides in the cytoplasm. The enzyme catalyses N-acetyl-L-glutamate + ATP = N-acetyl-L-glutamyl 5-phosphate + ADP. Its pathway is amino-acid biosynthesis; L-arginine biosynthesis; N(2)-acetyl-L-ornithine from L-glutamate: step 2/4. Catalyzes the ATP-dependent phosphorylation of N-acetyl-L-glutamate. The polypeptide is Acetylglutamate kinase (Leuconostoc mesenteroides subsp. mesenteroides (strain ATCC 8293 / DSM 20343 / BCRC 11652 / CCM 1803 / JCM 6124 / NCDO 523 / NBRC 100496 / NCIMB 8023 / NCTC 12954 / NRRL B-1118 / 37Y)).